We begin with the raw amino-acid sequence, 332 residues long: Terpene synthase 1 (332 aa).

Positions 81-86 (DDGLDA) match the DDxx(x)D/E motif motif. The short motif at 221–229 (NDLVSYEKE) is the NDxxSxxxD/E motif element.

It belongs to the terpene synthase family.

It carries out the reaction (2E,6E)-farnesyl diphosphate = (2S,3R,6S,9S)-(-)-protoillud-7-ene + diphosphate. In terms of biological role, terpene synthase that converts its substrate farnesyl diphosphate (FPP) into the sesquiterpene protoillud-7-ene. The chain is Terpene synthase 1 from Acytostelium subglobosum (Slime mold).